The primary structure comprises 635 residues: Sodium- and chloride-dependent transporter XTRP3B (635 aa).

The interval 1–38 is disordered; the sequence is MESPSAHAVSLPEDEELQPWGGAGGPGQHPGRPRSTEC. At 1–56 the chain is on the cytoplasmic side; that stretch reads MESPSAHAVSLPEDEELQPWGGAGGPGQHPGRPRSTECAHPGVVEKVRPKWDNPLQ. Residues 57–77 traverse the membrane as a helical segment; it reads FLLVCISYAVGLGNVWRFPYL. Residues 78 to 85 are Extracellular-facing; it reads CQMYGGGN. Residues 86 to 106 traverse the membrane as a helical segment; that stretch reads FLVPYIIMLIVEGMPLLYLEL. Residues 107-127 lie on the Cytoplasmic side of the membrane; it reads AVGQRMRQGSIGAWRTISPYL. The helical transmembrane segment at 128-148 threads the bilayer; the sequence is SGVGIASLVVSFLASVYFNVI. Topologically, residues 149 to 208 are extracellular; that stretch reads NTWALWYLFHSFQDPLPWSVCPLNSNHTGYDEECEKASSTQYFWYRKTLNISPSIQENGG. Residue Asn-174 is glycosylated (N-linked (GlcNAc...) asparagine). The chain crosses the membrane as a helical span at residues 209–229; sequence VQWEPALCLTLAWLMVYLCIL. Residues 230-237 lie on the Cytoplasmic side of the membrane; it reads RGTESTGK. A helical transmembrane segment spans residues 238–258; sequence VVYFTTSLPYFVLIIYLVRGL. Residues 259-284 lie on the Extracellular side of the membrane; that stretch reads TLHGATNGLAYMFTPKIEQLANPKAW. Residues 285 to 305 form a helical membrane-spanning segment; it reads INAATQIFFSLGLGCGGLIAF. At 306–319 the chain is on the cytoplasmic side; sequence ASYNEPSNDCQKHA. Residues 320-340 traverse the membrane as a helical segment; that stretch reads LIVSVINSTTAIFSSIVTFSI. The Extracellular portion of the chain corresponds to 341-432; the sequence is YGFKATFNYE…EAIKNMEVSQ (92 aa). The N-linked (GlcNAc...) asparagine glycan is linked to Asn-400. The helical transmembrane segment at 433 to 453 threads the bilayer; the sequence is LWSVLYFFMLLTLGMGSMVGT. Residues 454 to 474 lie on the Cytoplasmic side of the membrane; the sequence is GTAILTPLTDSKIISSYLPKE. A helical membrane pass occupies residues 475–495; that stretch reads AISGLVCLLNCAIGMVFTMEA. At 496 to 508 the chain is on the extracellular side; it reads GNYWFDLFNDYTA. A helical transmembrane segment spans residues 509 to 529; it reads TLSLLLIVLVETIAVCYVYGL. At 530 to 547 the chain is on the cytoplasmic side; that stretch reads KRFESDLRAMTGRTLSWY. A helical membrane pass occupies residues 548 to 568; that stretch reads WKVMWAFVSPLLIVGLFIFYL. Topologically, residues 569–597 are extracellular; that stretch reads SDYILTGTLQYQAWDATQGHVVTKDYPTY. The helical transmembrane segment at 598-618 threads the bilayer; sequence ALAVIGLLVASSTMCIPLVAL. The Cytoplasmic segment spans residues 619–635; that stretch reads GTFVTRHFKIREQFSAA.

The protein belongs to the sodium:neurotransmitter symporter (SNF) (TC 2.A.22) family. SLC6A20 subfamily. As to quaternary structure, interacts with CLTRN. Detected only in kidney and lung.

The protein resides in the apical cell membrane. In terms of biological role, does not show transporter activity with a range of tested amino acids including proline, glutamine, glutamic acid, leucine, alanine, histidine, glycine and arginine. The protein is Sodium- and chloride-dependent transporter XTRP3B (Slc6a20b) of Mus musculus (Mouse).